The chain runs to 201 residues: Large ribosomal subunit protein uL4 (201 aa).

The tract at residues 46–71 (QKTRAEITGTGKKPWRQKGTGRARAG) is disordered.

This sequence belongs to the universal ribosomal protein uL4 family. Part of the 50S ribosomal subunit.

Functionally, one of the primary rRNA binding proteins, this protein initially binds near the 5'-end of the 23S rRNA. It is important during the early stages of 50S assembly. It makes multiple contacts with different domains of the 23S rRNA in the assembled 50S subunit and ribosome. Forms part of the polypeptide exit tunnel. The polypeptide is Large ribosomal subunit protein uL4 (Shewanella amazonensis (strain ATCC BAA-1098 / SB2B)).